A 346-amino-acid chain; its full sequence is Histidinol-phosphate aminotransferase (346 aa).

An N6-(pyridoxal phosphate)lysine modification is found at lysine 209.

It belongs to the class-II pyridoxal-phosphate-dependent aminotransferase family. Histidinol-phosphate aminotransferase subfamily. In terms of assembly, homodimer. It depends on pyridoxal 5'-phosphate as a cofactor.

The catalysed reaction is L-histidinol phosphate + 2-oxoglutarate = 3-(imidazol-4-yl)-2-oxopropyl phosphate + L-glutamate. It functions in the pathway amino-acid biosynthesis; L-histidine biosynthesis; L-histidine from 5-phospho-alpha-D-ribose 1-diphosphate: step 7/9. The chain is Histidinol-phosphate aminotransferase from Vibrio parahaemolyticus serotype O3:K6 (strain RIMD 2210633).